The chain runs to 410 residues: MTAKALEGIRVLDMTHVQSGPSATQLLAWLGADVVKLEAPHGDITRGQLRDLPDVDSLYFTMLNCNKRSITLNTKSERGKEILTELIRRSDVMVENFGPGAVDRMGFTWDRVKEINPRIVYASIKGFGEGPYTAFKAYEVVAQAMGGSMSTTGFEDGPPLATGAQIGDSGTGVHVVAGILAALYQREHTGRGQRVNVAMQHAVLNLCRVKLRDQQRLSHGPLAEYPNEDFGDEVPRSGNASGGGQPGWAVKCAPGGPNDYVYVIVQPVGWQPLSELIGRPELAEDPEWATPRARLPKLNKMFQLIEEWSSTLPKWEVLERLNAHNIPCGPILSTKEIIEDDSLVANEMVVTVPHPERGEFVTVGSPLKLSDSPVEVTSSPLLGEHNEEVYVGELGLGDEELRLLKSSGVI.

CoA is bound by residues 18–19 (QS), 72–75 (LNTK), 96–98 (NFG), Arg104, and 136–139 (KAYE). The Nucleophile role is filled by Asp168. Residues 221–245 (PLAEYPNEDFGDEVPRSGNASGGGQ) form a disordered region. Residue 243–245 (GGQ) coordinates substrate.

The protein belongs to the CoA-transferase III family. Frc subfamily. As to quaternary structure, homodimer.

It carries out the reaction formyl-CoA + oxalate = oxalyl-CoA + formate. Its pathway is metabolic intermediate degradation; oxalate degradation; CO(2) and formate from oxalate: step 1/2. Involved in the catabolism of oxalate and in the adapatation to low pH via the induction of the oxalate-dependent acid tolerance response (ATR). Catalyzes the transfer of the CoA moiety from formyl-CoA to oxalate. The sequence is that of Formyl-CoA:oxalate CoA-transferase from Streptomyces coelicolor (strain ATCC BAA-471 / A3(2) / M145).